The primary structure comprises 36 residues: Pancreatic polypeptide (36 aa).

Tyrosine 36 bears the Tyrosine amide mark.

Belongs to the NPY family.

The protein localises to the secreted. Its function is as follows. Hormone secreted by pancreatic cells that acts as a regulator of pancreatic and gastrointestinal functions. This is Pancreatic polypeptide (PPY) from Anser anser anser (Western greylag goose).